The chain runs to 813 residues: DNA gyrase subunit A (813 aa).

The region spanning 38–504 (LPDVRDGLKP…EIEYLDVEDF (467 aa)) is the Topo IIA-type catalytic domain. Tyrosine 126 (O-(5'-phospho-DNA)-tyrosine intermediate) is an active-site residue. Positions 531–537 (QNRGGKG) match the GyrA-box motif.

The protein belongs to the type II topoisomerase GyrA/ParC subunit family. Heterotetramer, composed of two GyrA and two GyrB chains. In the heterotetramer, GyrA contains the active site tyrosine that forms a transient covalent intermediate with DNA, while GyrB binds cofactors and catalyzes ATP hydrolysis.

It localises to the cytoplasm. It catalyses the reaction ATP-dependent breakage, passage and rejoining of double-stranded DNA.. Functionally, a type II topoisomerase that negatively supercoils closed circular double-stranded (ds) DNA in an ATP-dependent manner to modulate DNA topology and maintain chromosomes in an underwound state. Negative supercoiling favors strand separation, and DNA replication, transcription, recombination and repair, all of which involve strand separation. Also able to catalyze the interconversion of other topological isomers of dsDNA rings, including catenanes and knotted rings. Type II topoisomerases break and join 2 DNA strands simultaneously in an ATP-dependent manner. The sequence is that of DNA gyrase subunit A from Treponema pallidum (strain Nichols).